The sequence spans 66 residues: Large ribosomal subunit protein bL35 (66 aa).

Belongs to the bacterial ribosomal protein bL35 family.

The polypeptide is Large ribosomal subunit protein bL35 (Rhodopseudomonas palustris (strain BisB18)).